Consider the following 72-residue polypeptide: Brevinin-2GHc (72 aa).

The first 22 residues, 1 to 22 (MFTMKKSLLLLFFLGMISLSLC), serve as a signal peptide directing secretion. Residues 23–42 (EQERGADEDEGEVEEQIKRS) constitute a propeptide that is removed on maturation. A disulfide bridge links C64 with C70.

As to expression, expressed by the skin glands.

The protein localises to the secreted. Its function is as follows. Antimicrobial peptide. Active against the Gram-positive bacteria S.aureus FDA209P (MIC=9.8 ug/ml) and B.subtilis ATCC 6633 (MIC&gt;64 ug/ml), and the Gram-negative bacteria E.coli O111 (MIC=19.6 ug/ml) and E.coli ATCC 25922 (MIC=9.8 ug/ml). Not active against the fungus C.albicans. The protein is Brevinin-2GHc of Sylvirana guentheri (Gunther's frog).